The following is a 429-amino-acid chain: UDP-N-acetylglucosamine 1-carboxyvinyltransferase (429 aa).

22–23 (KN) is a phosphoenolpyruvate binding site. Arg-102 contributes to the UDP-N-acetyl-alpha-D-glucosamine binding site. Cys-126 (proton donor) is an active-site residue. 2-(S-cysteinyl)pyruvic acid O-phosphothioketal is present on Cys-126. UDP-N-acetyl-alpha-D-glucosamine-binding positions include 131–135 (RPVDL), Asp-316, and Ile-338.

The protein belongs to the EPSP synthase family. MurA subfamily.

The protein resides in the cytoplasm. It catalyses the reaction phosphoenolpyruvate + UDP-N-acetyl-alpha-D-glucosamine = UDP-N-acetyl-3-O-(1-carboxyvinyl)-alpha-D-glucosamine + phosphate. It functions in the pathway cell wall biogenesis; peptidoglycan biosynthesis. Functionally, cell wall formation. Adds enolpyruvyl to UDP-N-acetylglucosamine. This is UDP-N-acetylglucosamine 1-carboxyvinyltransferase from Methylorubrum extorquens (strain CM4 / NCIMB 13688) (Methylobacterium extorquens).